Here is a 310-residue protein sequence, read N- to C-terminus: Small ribosomal subunit biogenesis GTPase RsgA (310 aa).

The CP-type G domain maps to 77-238 (LSKQSHILAA…IIDTPGIKGF (162 aa)). Residues 126-129 (NKVD) and 180-188 (GHSGVGKST) each bind GTP. 4 residues coordinate Zn(2+): Cys-262, Cys-267, His-269, and Cys-275.

It belongs to the TRAFAC class YlqF/YawG GTPase family. RsgA subfamily. Monomer. Associates with 30S ribosomal subunit, binds 16S rRNA. It depends on Zn(2+) as a cofactor.

It is found in the cytoplasm. Functionally, one of several proteins that assist in the late maturation steps of the functional core of the 30S ribosomal subunit. Helps release RbfA from mature subunits. May play a role in the assembly of ribosomal proteins into the subunit. Circularly permuted GTPase that catalyzes slow GTP hydrolysis, GTPase activity is stimulated by the 30S ribosomal subunit. The sequence is that of Small ribosomal subunit biogenesis GTPase RsgA from Bacteroides fragilis (strain ATCC 25285 / DSM 2151 / CCUG 4856 / JCM 11019 / LMG 10263 / NCTC 9343 / Onslow / VPI 2553 / EN-2).